Here is a 130-residue protein sequence, read N- to C-terminus: uncharacterized protein (130 aa).

Residues 23–130 form a disordered region; it reads SHLRLLPTAN…GAHQLSSPSS (108 aa). Polar residues predominate over residues 30-45; the sequence is TANSPSGSNQPTNPNR.

This is an uncharacterized protein from Homo sapiens (Human).